A 155-amino-acid polypeptide reads, in one-letter code: Small ribosomal subunit protein uS7c (155 aa).

This sequence belongs to the universal ribosomal protein uS7 family. In terms of assembly, part of the 30S ribosomal subunit.

It localises to the plastid. Its subcellular location is the chloroplast. Its function is as follows. One of the primary rRNA binding proteins, it binds directly to 16S rRNA where it nucleates assembly of the head domain of the 30S subunit. This is Small ribosomal subunit protein uS7c (rps7) from Sagittaria latifolia (Broadleaf arrowhead).